Here is a 292-residue protein sequence, read N- to C-terminus: Tricin synthase 2 (292 aa).

A disordered region spans residues Arg-21–Gly-46. Residues Thr-23–Ala-32 are compositionally biased toward polar residues. S-adenosyl-L-methionine contacts are provided by residues Ser-108, Glu-130, Gly-132–Val-133, Ser-138, Asp-156, and Ala-185. A divalent metal cation is bound at residue Asp-208. Asp-210 contacts S-adenosyl-L-methionine. Residues Asp-234 and Asn-235 each contribute to the a divalent metal cation site.

The protein belongs to the class I-like SAM-binding methyltransferase superfamily. Cation-dependent O-methyltransferase family. CCoAMT subfamily. Mg(2+) serves as cofactor. It depends on Mn(2+) as a cofactor. As to expression, expressed in stems only.

The catalysed reaction is tricetin + 2 S-adenosyl-L-methionine = 3',5'-di-O-methyltricetin + 2 S-adenosyl-L-homocysteine + 2 H(+). Its function is as follows. Catalyzes the stepwise methylation of tricetin to its 3'-mono- and 3',5'-dimethyl ethers. No 3',4',5'-trimethylated ester derivatives are produced. Can use caffeoyl CoA, 5-hydroxyferulic acid, luteolin, tricetin, quercetin, myrcetin and 7,8-dihydroxyflavone as substrates, but not naringenin, apigenin or kaempferol. The 2,3-double bond and the O-dihydroxyl group of the substrate are both required for catalytic activity of the enzyme. The sequence is that of Tricin synthase 2 (ROMT-17) from Oryza sativa subsp. japonica (Rice).